The following is a 255-amino-acid chain: tRNA (guanine-N(1)-)-methyltransferase (255 aa).

Residues G113 and I133–L138 each bind S-adenosyl-L-methionine.

It belongs to the RNA methyltransferase TrmD family. As to quaternary structure, homodimer.

It localises to the cytoplasm. It carries out the reaction guanosine(37) in tRNA + S-adenosyl-L-methionine = N(1)-methylguanosine(37) in tRNA + S-adenosyl-L-homocysteine + H(+). In terms of biological role, specifically methylates guanosine-37 in various tRNAs. The protein is tRNA (guanine-N(1)-)-methyltransferase of Salmonella agona (strain SL483).